A 124-amino-acid polypeptide reads, in one-letter code: Small ribosomal subunit protein uS12cy (124 aa).

The protein belongs to the universal ribosomal protein uS12 family. In terms of assembly, part of the 30S ribosomal subunit.

Its subcellular location is the plastid. The protein resides in the chloroplast. Functionally, with S4 and S5 plays an important role in translational accuracy. Located at the interface of the 30S and 50S subunits. In Olimarabidopsis pumila (Dwarf rocket), this protein is Small ribosomal subunit protein uS12cy (rps12-B).